Here is a 190-residue protein sequence, read N- to C-terminus: 7-methyl-GTP pyrophosphatase (190 aa).

D69 acts as the Proton acceptor in catalysis.

This sequence belongs to the Maf family. YceF subfamily. It depends on a divalent metal cation as a cofactor.

It localises to the cytoplasm. The enzyme catalyses N(7)-methyl-GTP + H2O = N(7)-methyl-GMP + diphosphate + H(+). In terms of biological role, nucleoside triphosphate pyrophosphatase that hydrolyzes 7-methyl-GTP (m(7)GTP). May have a dual role in cell division arrest and in preventing the incorporation of modified nucleotides into cellular nucleic acids. The protein is 7-methyl-GTP pyrophosphatase of Xanthomonas oryzae pv. oryzae (strain MAFF 311018).